The sequence spans 174 residues: Large ribosomal subunit protein uL10 (174 aa).

Belongs to the universal ribosomal protein uL10 family. As to quaternary structure, part of the ribosomal stalk of the 50S ribosomal subunit. The N-terminus interacts with L11 and the large rRNA to form the base of the stalk. The C-terminus forms an elongated spine to which L12 dimers bind in a sequential fashion forming a multimeric L10(L12)X complex.

In terms of biological role, forms part of the ribosomal stalk, playing a central role in the interaction of the ribosome with GTP-bound translation factors. The sequence is that of Large ribosomal subunit protein uL10 from Syntrophus aciditrophicus (strain SB).